We begin with the raw amino-acid sequence, 479 residues long: Variant surface glycoprotein ILTAT 1.22 (479 aa).

An N-terminal signal peptide occupies residues 1–12 (MDTAQVFALFYM). 2 N-linked (GlcNAc...) asparagine glycosylation sites follow: Asn-120 and Asn-458. Residue Asn-462 is the site of GPI-anchor amidated asparagine attachment. Positions 463-479 (NSFAIKTSTLLLAVLLF) are cleaved as a propeptide — removed in mature form.

It is found in the cell membrane. VSG forms a coat on the surface of the parasite. The trypanosome evades the immune response of the host by expressing a series of antigenically distinct VSGs from an estimated 1000 VSG genes. This chain is Variant surface glycoprotein ILTAT 1.22, found in Trypanosoma brucei brucei.